The primary structure comprises 423 residues: Lipid droplet-regulating VLDL assembly factor AUP1 (423 aa).

Over 1 to 19 (METRGIEQMFDFQRLPNDR) the chain is Cytoplasmic. Residues 20 to 40 (FILLLLLLYAPVGFCLMLLRI) lie within the membrane without spanning it. Residues 41–423 (FIGVHVFLVS…KHGLNKEDDL (383 aa)) lie on the Cytoplasmic side of the membrane. Residues 304–346 (RIARLAQQVKEVLPDVPVSVITRDLLQTNCVDTTITNLLERTD) form the CUE domain. Residues 355 to 392 (TMPSGPGKAAASSTPSAMVSSPNLKPAAKSFGRSPIDR) form a disordered region. A compositionally biased stretch (polar residues) spans 365 to 377 (ASSTPSAMVSSPN).

Belongs to the AUP1 family.

It is found in the endoplasmic reticulum membrane. Its subcellular location is the lipid droplet. Its function is as follows. Plays a role in the translocation of terminally misfolded proteins from the endoplasmic reticulum lumen to the cytoplasm and their degradation by the proteasome. Plays a role in lipid droplet formation. Induces lipid droplet clustering. The protein is Lipid droplet-regulating VLDL assembly factor AUP1 of Danio rerio (Zebrafish).